A 56-amino-acid polypeptide reads, in one-letter code: uncharacterized protein (56 aa).

This is an uncharacterized protein from Lepidoptera (butterflies and moths).